The primary structure comprises 119 residues: Large ribosomal subunit protein bL20 (119 aa).

It belongs to the bacterial ribosomal protein bL20 family.

In terms of biological role, binds directly to 23S ribosomal RNA and is necessary for the in vitro assembly process of the 50S ribosomal subunit. It is not involved in the protein synthesizing functions of that subunit. In Herminiimonas arsenicoxydans, this protein is Large ribosomal subunit protein bL20.